We begin with the raw amino-acid sequence, 583 residues long: MAGDGRRAEAVREGWGVYVTPRAPIREGRGRLAPQNGGSSDAPAYRTPPSRQGRREVRFSDEPPEVYGDFEPLVAKERSPVGKRTRLEEFRSDSAKEEVRESAYYLRSRQRRQPRPQETEEMKTRRTTRLQQQHSEQPPLQPSPVMTRRGLRDSHSSEEDEASSQTDLSQTISKKTVRSIQEAPVSEDLVIRLRRPPLRYPRYEATSVQQKVNFSEEGETEEDDQDSSHSSVTTVKARSRDSDESGDKTTRSSSQYIESFWQSSQSQNFTAHDKQPSVLSSGYQKTPQEWAPQTARIRTRMQNDSILKSELGNQSPSTSSRQVTGQPQNASFVKRNRWWLLPLIAALASGSFWFFSTPEVETTAVQEFQNQMNQLKNKYQGQDEKLWKRSQTFLEKHLNSSHPRSQPAILLLTAARDAEEALRCLSEQIADAYSSFRSVRAIRIDGTDKATQDSDTVKLEVDQELSNGFKNGQNAAVVHRFESFPAGSTLIFYKYCDHENAAFKDVALVLTVLLEEETLGTSLGLKEVEEKVRDFLKVKFTNSNTPNSYNHMDPDKLNGLWSRISHLVLPVQPENALKRGICL.

Basic and acidic residues predominate over residues 1–12; the sequence is MAGDGRRAEAVR. Disordered regions lie at residues 1-254 and 271-293; these read MAGD…RSSS and AHDK…WAPQ. Residues 1-338 lie on the Nuclear side of the membrane; that stretch reads MAGDGRRAEA…NASFVKRNRW (338 aa). Position 60 is a phosphoserine (serine 60). Basic and acidic residues-rich tracts occupy residues 74-101 and 115-124; these read VAKE…EVRE and RPQETEEMKT. Serine 135 and serine 143 each carry phosphoserine. The residue at position 146 (methionine 146) is a Methionine sulfoxide. Phosphoserine is present on residues serine 154, serine 156, and serine 157. The span at 165–174 shows a compositional bias: polar residues; sequence QTDLSQTISK. 2 positions are modified to phosphoserine: serine 186 and serine 215. Over residues 216-225 the composition is skewed to acidic residues; sequence EEGETEEDDQ. Threonine 220 carries the post-translational modification Phosphothreonine. Phosphoserine is present on residues serine 227, serine 230, and serine 242. Over residues 238–250 the composition is skewed to basic and acidic residues; the sequence is RSRDSDESGDKTT. A compositionally biased stretch (polar residues) spans 277-287; the sequence is SVLSSGYQKTP. Methionine sulfoxide is present on methionine 301. At serine 305 the chain carries Phosphoserine. A Glycyl lysine isopeptide (Lys-Gly) (interchain with G-Cter in SUMO2) cross-link involves residue lysine 308. Phosphoserine is present on residues serine 309 and serine 315. The interval 309 to 328 is disordered; the sequence is SELGNQSPSTSSRQVTGQPQ. Residues 339 to 355 traverse the membrane as a helical segment; the sequence is WLLPLIAALASGSFWFF. At 356–583 the chain is on the perinuclear space side; it reads STPEVETTAV…ENALKRGICL (228 aa). Residues 356 to 583 form an interaction with TOR1A region; that stretch reads STPEVETTAV…ENALKRGICL (228 aa). Residues 359-435 are a coiled coil; it reads EVETTAVQEF…SEQIADAYSS (77 aa). N-linked (GlcNAc...) asparagine glycosylation occurs at asparagine 399. Methionine sulfoxide is present on methionine 552.

The protein belongs to the TOR1AIP family. In terms of assembly, interacts with ATP1B4. Interacts with TOR1A (ATP-bound). Interacts with TOR1B, TOR2A and TOR3A. Interacts with VIM. Post-translationally, phosphorylated. Dephosphorylated at Ser-309 and Ser-315 by serine/threonine-protein phosphatase PP1. In terms of tissue distribution, expressed in muscle, liver and kidney. As to expression, major isoform present in liver, brain and heart (at protein level). Expressed at lower levels than isoform 4 in lung, kidney and spleen (at protein level). Similar levels of isoforms 1 and 4 are observed in ovary, testis and pancreas (at protein level). Expressed at higher levels than isoform 1 in lung, kidney and spleen (at protein level). Expressed at lower levels than isoform 1 in liver, brain and heart (at protein level). Similar levels of isoforms 1 and 4 are observed in ovary, testis and pancreas (at protein level).

The protein localises to the nucleus inner membrane. Its subcellular location is the nucleus envelope. It is found in the nucleus. In terms of biological role, required for nuclear membrane integrity. Induces TOR1A and TOR1B ATPase activity and is required for their location on the nuclear membrane. Binds to A- and B-type lamins. Possible role in membrane attachment and assembly of the nuclear lamina. The protein is Torsin-1A-interacting protein 1 (TOR1AIP1) of Homo sapiens (Human).